The following is a 208-amino-acid chain: Holliday junction branch migration complex subunit RuvA (208 aa).

The domain I stretch occupies residues 1 to 69 (MIGFLQGYVV…EDQMVLFGFA (69 aa)). A domain II region spans residues 70-148 (VVAERDLFRQ…EWRDQAGLKT (79 aa)). The segment at 149 to 159 (LPSAGPIDSVQ) is flexible linker. Positions 159-208 (QEDVEMTLLALGYTSQEVMRALQAVGQNTALAKNSDTEAWIREAIAWLSQ) are domain III.

Belongs to the RuvA family. Homotetramer. Forms an RuvA(8)-RuvB(12)-Holliday junction (HJ) complex. HJ DNA is sandwiched between 2 RuvA tetramers; dsDNA enters through RuvA and exits via RuvB. An RuvB hexamer assembles on each DNA strand where it exits the tetramer. Each RuvB hexamer is contacted by two RuvA subunits (via domain III) on 2 adjacent RuvB subunits; this complex drives branch migration. In the full resolvosome a probable DNA-RuvA(4)-RuvB(12)-RuvC(2) complex forms which resolves the HJ.

Its subcellular location is the cytoplasm. Functionally, the RuvA-RuvB-RuvC complex processes Holliday junction (HJ) DNA during genetic recombination and DNA repair, while the RuvA-RuvB complex plays an important role in the rescue of blocked DNA replication forks via replication fork reversal (RFR). RuvA specifically binds to HJ cruciform DNA, conferring on it an open structure. The RuvB hexamer acts as an ATP-dependent pump, pulling dsDNA into and through the RuvAB complex. HJ branch migration allows RuvC to scan DNA until it finds its consensus sequence, where it cleaves and resolves the cruciform DNA. The chain is Holliday junction branch migration complex subunit RuvA from Acaryochloris marina (strain MBIC 11017).